The sequence spans 933 residues: Anoctamin-7 (933 aa).

The Cytoplasmic segment spans residues 1–355; the sequence is MRMAATAWAG…YFAWLGFYTG (355 aa). The disordered stretch occupies residues 43–101; that stretch reads ETSSGSHCARSRMLRRRAQEEDSTVLIDVSPPEAEKRGSYGSTAHASEPGGQQAAACRA. The chain crosses the membrane as a helical span at residues 356–376; the sequence is WLLPAAVVGTLVFLVGCFLVF. At 377–420 the chain is on the extracellular side; sequence SDIPTQELCGSKDSFEMCPLCLDCPFWLLSSACALAQAGRLFDH. The chain crosses the membrane as a helical span at residues 421–441; that stretch reads GGTVFFSLFMALWAVLLLEYW. Topologically, residues 442 to 499 are cytoplasmic; it reads KRKSATLAYRWDCSDYEDTEERPRPQFAASAPMTAPNPITGEDEPYFPERSRARRMLA. Residues 500-520 form a helical membrane-spanning segment; that stretch reads GSVVIVVMVAVVVMCLVSIIL. The Extracellular segment spans residues 521–550; it reads YRAIMAIVVSRSGNTLLAAWASRIASLTGS. Residues 551 to 571 form a helical membrane-spanning segment; it reads VVNLVFILILSKIYVSLAHVL. The Cytoplasmic portion of the chain corresponds to 572 to 588; sequence TRWEMHRTQTKFEDAFT. Residues 589 to 609 traverse the membrane as a helical segment; that stretch reads LKVFIFQFVNFYSSPVYIAFF. At 610–714 the chain is on the extracellular side; that stretch reads KGRFVGYPGN…FDEYLEMVLQ (105 aa). Residues 715–735 traverse the membrane as a helical segment; that stretch reads FGFVTIFVAACPLAPLFALLN. Residues 736 to 763 lie on the Cytoplasmic side of the membrane; sequence NWVEIRLDARKFVCEYRRPVAERAQDIG. The chain crosses the membrane as a helical span at residues 764–784; that stretch reads IWFHILAGLTHLAVISNAFLL. Residues 785–843 are Extracellular-facing; that stretch reads AFSSDFLPRAYYRWTRAHDLRGFLNFTLARAPSSFAAAHNRTCRYRAFRDDDGHYSQTY. Residues asparagine 809 and asparagine 824 are each glycosylated (N-linked (GlcNAc...) asparagine). A helical membrane pass occupies residues 844-864; the sequence is WNLLAIRLAFVIVFEHVVFSV. The Cytoplasmic segment spans residues 865 to 933; the sequence is GRLLDLLVPD…TVPKASQLQQ (69 aa). A disordered region spans residues 902–933; sequence GTNGTKDEQPEGSELSSHWTPFTVPKASQLQQ. Residues 915-933 show a composition bias toward polar residues; it reads ELSSHWTPFTVPKASQLQQ.

Belongs to the anoctamin family. As to expression, specifically expressed in epithelial cells of the prostate (at protein level).

Its subcellular location is the cell membrane. The protein localises to the cell junction. It is found in the endoplasmic reticulum. It localises to the cytoplasm. The protein resides in the cytosol. It catalyses the reaction a 1,2-diacyl-sn-glycero-3-phospho-L-serine(in) = a 1,2-diacyl-sn-glycero-3-phospho-L-serine(out). The enzyme catalyses a beta-D-galactosyl-(1&lt;-&gt;1')-N-acylsphing-4-enine(out) = a beta-D-galactosyl-(1&lt;-&gt;1')-N-acylsphing-4-enine(in). It carries out the reaction a 1,2-diacyl-sn-glycero-3-phosphocholine(in) = a 1,2-diacyl-sn-glycero-3-phosphocholine(out). Functionally, has calcium-dependent phospholipid scramblase activity; scrambles phosphatidylserine, phosphatidylcholine and galactosylceramide. Does not exhibit calcium-activated chloride channel (CaCC) activity. May play a role in cell-cell interactions. The protein is Anoctamin-7 (ANO7) of Homo sapiens (Human).